The following is a 280-amino-acid chain: Cytochrome c1 (280 aa).

The signal sequence occupies residues 1–21 (MKKLLISAVSALVLGSGAALA). Heme c contacts are provided by Cys55, Cys58, His59, and Met205. Residues 249-267 (MGLVAVVMLGLLSVMLYLT) traverse the membrane as a helical segment.

The main subunits of complex b-c1 are: cytochrome b, cytochrome c1 and the Rieske protein. In terms of processing, binds 1 heme c group covalently per subunit.

It localises to the cell membrane. Component of the ubiquinol-cytochrome c reductase complex (complex III or cytochrome b-c1 complex), which is a respiratory chain that generates an electrochemical potential coupled to ATP synthesis. c1 functions as an electron donor to cytochrome c. The chain is Cytochrome c1 (petC) from Rhodobacter capsulatus (Rhodopseudomonas capsulata).